A 780-amino-acid chain; its full sequence is Heat shock protein 90-5, chloroplastic (780 aa).

The transit peptide at M1–K60 directs the protein to the chloroplast. ATP contacts are provided by residues E106, N110, D152, M157, S172 to G173, Q196 to F201, T251, and R441. The disordered stretch occupies residues G742–D780. The segment covering S769–D780 has biased composition (basic and acidic residues).

The protein belongs to the heat shock protein 90 family. As to quaternary structure, homodimer. Interacts with VIPP1. Interacts with P23-1. Expressed in roots, cotyledons, young leaves, mature leaves, stems, flowers, petals and siliques.

It localises to the plastid. It is found in the chloroplast stroma. Its function is as follows. Molecular chaperone required for chloroplast biogenesis. Essential for chloroplast biogenesis and maintenance, and thus for embryogenesis. May be involved in the disassembly of VIPP1 for thylakoid membrane formation and/or maintenance. Cooperates with TIC components and other molecular chaperones to drive transport of preproteins into chloroplasts and functions in the chloroplast stroma to facilitate membrane translocation during protein import into the organelle. The polypeptide is Heat shock protein 90-5, chloroplastic (Arabidopsis thaliana (Mouse-ear cress)).